A 370-amino-acid polypeptide reads, in one-letter code: DNA replication and repair protein RecF (370 aa).

30–37 is a binding site for ATP; sequence GQNGMGKT.

The protein belongs to the RecF family.

Its subcellular location is the cytoplasm. Its function is as follows. The RecF protein is involved in DNA metabolism; it is required for DNA replication and normal SOS inducibility. RecF binds preferentially to single-stranded, linear DNA. It also seems to bind ATP. The sequence is that of DNA replication and repair protein RecF from Bacteroides fragilis (strain YCH46).